Consider the following 444-residue polypeptide: NADH-quinone oxidoreductase subunit F (444 aa).

62–71 (GRGGAGFLTG) serves as a coordination point for NAD(+). 177–224 (GAGRYICGEETALINSLEGRRANPRFKPPFPAYVGLWGKPTCVNNVET) serves as a coordination point for FMN. C354, C357, C360, and C401 together coordinate [4Fe-4S] cluster.

This sequence belongs to the complex I 51 kDa subunit family. Composed of 13 different subunits. Subunits NuoCD, E, F, and G constitute the peripheral sector of the complex. The cofactor is [4Fe-4S] cluster. It depends on FMN as a cofactor.

The enzyme catalyses a quinone + NADH + 5 H(+)(in) = a quinol + NAD(+) + 4 H(+)(out). In terms of biological role, NDH-1 shuttles electrons from NADH, via FMN and iron-sulfur (Fe-S) centers, to quinones in the respiratory chain. Couples the redox reaction to proton translocation (for every two electrons transferred, four hydrogen ions are translocated across the cytoplasmic membrane), and thus conserves the redox energy in a proton gradient. The protein is NADH-quinone oxidoreductase subunit F (nuoF) of Buchnera aphidicola subsp. Baizongia pistaciae (strain Bp).